The chain runs to 891 residues: DNA mismatch repair protein MutS (891 aa).

G634–S641 provides a ligand contact to ATP.

The protein belongs to the DNA mismatch repair MutS family.

Its function is as follows. This protein is involved in the repair of mismatches in DNA. It is possible that it carries out the mismatch recognition step. This protein has a weak ATPase activity. In Burkholderia mallei (strain NCTC 10247), this protein is DNA mismatch repair protein MutS.